We begin with the raw amino-acid sequence, 250 residues long: uncharacterized protein (250 aa).

The N-terminal 52 residues, 1 to 52, are a transit peptide targeting the mitochondrion; the sequence is MALAWCVVRRSASKFASVYGGRVRSISAVANRASLARNPSSIRPFVSRALNY. A disordered region spans residues 124-147; it reads PSLVSDENDDDDDDDEGPSNESSI. The span at 129–141 shows a compositional bias: acidic residues; that stretch reads DENDDDDDDDEGP.

This sequence belongs to the MAM33 family.

It localises to the mitochondrion matrix. This is an uncharacterized protein from Arabidopsis thaliana (Mouse-ear cress).